Consider the following 208-residue polypeptide: Thioesterase 1/protease 1/lysophospholipase L1 (208 aa).

The signal sequence occupies residues 1-26; the sequence is MMNFNNVFRWHLPFLFLVLLTFRAAA. Residue S36 is the Nucleophile of the active site. The substrate site is built by G70 and N99. Active-site residues include D180 and H183.

Belongs to the 'GDSL' lipolytic enzyme family. In terms of assembly, monomer or homotetramer.

It localises to the periplasm. The catalysed reaction is a fatty acyl-CoA + H2O = a fatty acid + CoA + H(+). It catalyses the reaction hexadecanoyl-CoA + H2O = hexadecanoate + CoA + H(+). The enzyme catalyses (9Z)-hexadecenoyl-CoA + H2O = (9Z)-hexadecenoate + CoA + H(+). It carries out the reaction octadecanoyl-CoA + H2O = octadecanoate + CoA + H(+). The catalysed reaction is (9Z)-octadecenoyl-CoA + H2O = (9Z)-octadecenoate + CoA + H(+). It catalyses the reaction (9Z)-octadecenoyl-[ACP] + H2O = (9Z)-octadecenoate + holo-[ACP] + H(+). The enzyme catalyses (11Z)-octadecenoyl-CoA + H2O = (11Z)-octadecenoate + CoA + H(+). It carries out the reaction tetradecanoyl-CoA + H2O = tetradecanoate + CoA + H(+). The catalysed reaction is (5Z,8Z,11Z,14Z)-eicosatetraenoyl-CoA + H2O = (5Z,8Z,11Z,14Z)-eicosatetraenoate + CoA + H(+). It catalyses the reaction dodecanoyl-CoA + H2O = dodecanoate + CoA + H(+). The enzyme catalyses decanoyl-CoA + H2O = decanoate + CoA + H(+). It carries out the reaction hexanoyl-CoA + H2O = hexanoate + CoA + H(+). The catalysed reaction is a 1-acyl-sn-glycero-3-phosphocholine + H2O = sn-glycerol 3-phosphocholine + a fatty acid + H(+). It catalyses the reaction a phenyl acetate + H2O = a phenol + acetate + H(+). The enzyme catalyses a butanoate ester + H2O = an aliphatic alcohol + butanoate + H(+). It carries out the reaction a hexanoate ester + H2O = an aliphatic alcohol + hexanoate + H(+). The catalysed reaction is an octanoate ester + H2O = an aliphatic alcohol + octanoate + H(+). Functionally, tesA is a multifunctional esterase that can act as a thioesterase, arylesterase, lysophospholipase and protease. In Escherichia coli O6:H1 (strain CFT073 / ATCC 700928 / UPEC), this protein is Thioesterase 1/protease 1/lysophospholipase L1 (tesA).